A 793-amino-acid chain; its full sequence is Kinesin-like protein KIN-14C (793 aa).

Residues 1–43 form a disordered region; sequence MASRNQNRPPRSPNAKKEGLGGISFDKRRKVETQGGTGRRQAF. Positions 1–69 are globular; that stretch reads MASRNQNRPP…IEECGKVDFT (69 aa). The segment covering 15-32 has biased composition (basic and acidic residues); the sequence is AKKEGLGGISFDKRRKVE. Residues 120–375 adopt a coiled-coil conformation; sequence KENLKVSLES…EQQLAIANER (256 aa). In terms of domain architecture, Kinesin motor spans 431–772; the sequence is NIRVFCRVRP…LRFAARVNAC (342 aa). 516–523 is a binding site for ATP; sequence GQTGSGKT.

Belongs to the TRAFAC class myosin-kinesin ATPase superfamily. Kinesin family. KIN-14 subfamily.

It localises to the cytoplasm. The protein localises to the cytoskeleton. It is found in the spindle. Its subcellular location is the phragmoplast. The protein resides in the chromosome. It localises to the centromere. The protein localises to the kinetochore. In terms of biological role, kinesin that supports microtubule movement in an ATP-dependent manner and has a minus-end directed polarity. Plays a crucial role in spindle morphogenesis in male meiosis. In mitosis, is required for normal microtubule accumulation at the spindle poles during prophase and may play a role in spindle assembly during prometaphase. The chain is Kinesin-like protein KIN-14C from Arabidopsis thaliana (Mouse-ear cress).